The chain runs to 460 residues: Light-independent protochlorophyllide reductase subunit N (460 aa).

[4Fe-4S] cluster contacts are provided by cysteine 22, cysteine 47, and cysteine 107.

It belongs to the BchN/ChlN family. As to quaternary structure, protochlorophyllide reductase is composed of three subunits; ChlL, ChlN and ChlB. Forms a heterotetramer of two ChlB and two ChlN subunits. [4Fe-4S] cluster is required as a cofactor.

It carries out the reaction chlorophyllide a + oxidized 2[4Fe-4S]-[ferredoxin] + 2 ADP + 2 phosphate = protochlorophyllide a + reduced 2[4Fe-4S]-[ferredoxin] + 2 ATP + 2 H2O. Its pathway is porphyrin-containing compound metabolism; chlorophyll biosynthesis (light-independent). Component of the dark-operative protochlorophyllide reductase (DPOR) that uses Mg-ATP and reduced ferredoxin to reduce ring D of protochlorophyllide (Pchlide) to form chlorophyllide a (Chlide). This reaction is light-independent. The NB-protein (ChlN-ChlB) is the catalytic component of the complex. In Thermosynechococcus vestitus (strain NIES-2133 / IAM M-273 / BP-1), this protein is Light-independent protochlorophyllide reductase subunit N.